The primary structure comprises 93 residues: Exodeoxyribonuclease 7 small subunit (93 aa).

The disordered stretch occupies residues 1–22; it reads MAKTASPGATPPGNGAEPLPDN.

Belongs to the XseB family. Heterooligomer composed of large and small subunits.

Its subcellular location is the cytoplasm. It catalyses the reaction Exonucleolytic cleavage in either 5'- to 3'- or 3'- to 5'-direction to yield nucleoside 5'-phosphates.. Functionally, bidirectionally degrades single-stranded DNA into large acid-insoluble oligonucleotides, which are then degraded further into small acid-soluble oligonucleotides. In Burkholderia multivorans (strain ATCC 17616 / 249), this protein is Exodeoxyribonuclease 7 small subunit.